The sequence spans 163 residues: Nucleotide-binding protein Pnap_1080 (163 aa).

The protein belongs to the YajQ family.

Nucleotide-binding protein. This chain is Nucleotide-binding protein Pnap_1080, found in Polaromonas naphthalenivorans (strain CJ2).